The following is a 129-amino-acid chain: Iron-sulfur cluster assembly 1 homolog, mitochondrial (129 aa).

A mitochondrion-targeting transit peptide spans 1-12; that stretch reads MSASLVRATVRA. Positions 57, 121, and 123 each coordinate Fe cation.

This sequence belongs to the HesB/IscA family. Interacts with CRY2, but not with CRY1 (in vitro).

The protein localises to the mitochondrion. Involved in the maturation of mitochondrial 4Fe-4S proteins functioning late in the iron-sulfur cluster assembly pathway. Probably involved in the binding of an intermediate of Fe/S cluster assembly. In Mus musculus (Mouse), this protein is Iron-sulfur cluster assembly 1 homolog, mitochondrial (Isca1).